The chain runs to 334 residues: GTP 3',8-cyclase (334 aa).

A Radical SAM core domain is found at 11 to 236 (GFNRKIDYLR…ESTESSQGPA (226 aa)). Arg-20 contributes to the GTP binding site. Positions 27 and 31 each coordinate [4Fe-4S] cluster. Tyr-33 is an S-adenosyl-L-methionine binding site. Position 34 (Cys-34) interacts with [4Fe-4S] cluster. GTP is bound at residue Arg-69. An S-adenosyl-L-methionine-binding site is contributed by Gly-73. Thr-100 contacts GTP. Ser-124 is an S-adenosyl-L-methionine binding site. Lys-161 lines the GTP pocket. Met-195 is a binding site for S-adenosyl-L-methionine. The [4Fe-4S] cluster site is built by Cys-260 and Cys-263. 265–267 (RVR) lines the GTP pocket. Cys-277 lines the [4Fe-4S] cluster pocket.

Belongs to the radical SAM superfamily. MoaA family. Monomer and homodimer. [4Fe-4S] cluster is required as a cofactor.

The enzyme catalyses GTP + AH2 + S-adenosyl-L-methionine = (8S)-3',8-cyclo-7,8-dihydroguanosine 5'-triphosphate + 5'-deoxyadenosine + L-methionine + A + H(+). It functions in the pathway cofactor biosynthesis; molybdopterin biosynthesis. Its function is as follows. Catalyzes the cyclization of GTP to (8S)-3',8-cyclo-7,8-dihydroguanosine 5'-triphosphate. The protein is GTP 3',8-cyclase of Pseudomonas putida (strain W619).